The following is a 1073-amino-acid chain: Semaphorin-6D (1073 aa).

The signal sequence occupies residues 1–20 (MRVFLLCAYILLLMVSQLRA). Topologically, residues 21 to 662 (VSFPEDDEPL…GESNQMVHMN (642 aa)) are extracellular. Residues 27–512 (DEPLNTVDYH…FSSCIIRIPL (486 aa)) form the Sema domain. A glycan (N-linked (GlcNAc...) asparagine) is linked at N51. Cystine bridges form between C108–C118, C136–C145, C259–C370, and C284–C329. N283 is a glycosylation site (N-linked (GlcNAc...) asparagine). N435 and N461 each carry an N-linked (GlcNAc...) asparagine glycan. 4 disulfide bridges follow: C477–C506, C515–C533, C521–C568, and C525–C541. A PSI domain is found at 514–569 (RCERYGSCKKSCIASRDPYCGWLSQGSCGRVTPGMLAEGYEQDTEFGNTAHLGDCH). Residue N631 is glycosylated (N-linked (GlcNAc...) asparagine). The chain crosses the membrane as a helical span at residues 663 to 683 (VLITCVFAAFVLGAFIAGVAV). Residues 684 to 1073 (YCYRDMFVRK…SVRPLNKYTY (390 aa)) lie on the Cytoplasmic side of the membrane. Residues S723, S734, and S744 each carry the phosphoserine modification. Disordered stretches follow at residues 744-775 (SRKE…PTPE), 787-825 (AMKS…GHIP), 839-874 (TSFS…RSVD), 914-1005 (SMSE…PTPT), and 1021-1073 (LQPS…KYTY). T773 is subject to Phosphothreonine. Residues 790 to 805 (SHSEKAHGHGASRKET) show a composition bias toward basic and acidic residues. 3 positions are modified to phosphoserine: S931, S957, and S983. Polar residues predominate over residues 931–942 (SPPSTLPRNSPT). Polar residues-rich tracts occupy residues 980-995 (NLNS…QPSM) and 1021-1037 (LQPS…NGTL).

Belongs to the semaphorin family.

It localises to the cell membrane. The protein localises to the cytoplasm. In terms of biological role, shows growth cone collapsing activity on dorsal root ganglion (DRG) neurons in vitro. May be a stop signal for the DRG neurons in their target areas, and possibly also for other neurons. May also be involved in the maintenance and remodeling of neuronal connections. Ligand of TREM2 with PLXNA1 as coreceptor in dendritic cells, plays a role in the generation of immune responses and skeletal homeostasis. The sequence is that of Semaphorin-6D from Homo sapiens (Human).